Here is a 918-residue protein sequence, read N- to C-terminus: Translation initiation factor IF-2 (918 aa).

Residues Asp39–Thr321 form a disordered region. Positions Lys95 to Asn146 are enriched in low complexity. The segment covering Pro148–Arg158 has biased composition (basic and acidic residues). Over residues Ala159 to Glu174 the composition is skewed to low complexity. Polar residues predominate over residues Pro180–Ala190. Low complexity-rich tracts occupy residues Asn201–Asn231, Ser237–Asn267, and Gly278–Pro296. Over residues Arg302–Arg313 the composition is skewed to basic residues. Positions Ser419–Lys588 constitute a tr-type G domain. The interval Gly428–Thr435 is G1. Gly428–Thr435 serves as a coordination point for GTP. A G2 region spans residues Gly453–Gly457. The interval Asp474–Gly477 is G3. Residues Asp474–His478 and Asn528–Asp531 each bind GTP. A G4 region spans residues Asn528–Asp531. Residues Ser564–Lys566 form a G5 region.

It belongs to the TRAFAC class translation factor GTPase superfamily. Classic translation factor GTPase family. IF-2 subfamily.

It localises to the cytoplasm. In terms of biological role, one of the essential components for the initiation of protein synthesis. Protects formylmethionyl-tRNA from spontaneous hydrolysis and promotes its binding to the 30S ribosomal subunits. Also involved in the hydrolysis of GTP during the formation of the 70S ribosomal complex. This Pediococcus pentosaceus (strain ATCC 25745 / CCUG 21536 / LMG 10740 / 183-1w) protein is Translation initiation factor IF-2.